The chain runs to 471 residues: Indole-3-acetate beta-glucosyltransferase (471 aa).

The active-site Proton acceptor is His15. Residue His15 participates in an anthocyanidin binding. The active-site Charge relay is the Asp107. UDP-alpha-D-glucose-binding residues include Thr129, Gln344, His359, Trp362, Asn363, Ser364, Glu367, Asp383, and Gln384.

It belongs to the UDP-glycosyltransferase family.

It catalyses the reaction (indol-3-yl)acetate + UDP-alpha-D-glucose = 1-O-(indol-3-ylacetyl)-beta-D-glucose + UDP. Its pathway is plant hormone metabolism; auxin conjugation. The chain is Indole-3-acetate beta-glucosyltransferase (IAGLU) from Zea mays (Maize).